The chain runs to 198 residues: Outer-membrane lipoprotein carrier protein (198 aa).

The N-terminal stretch at 1 to 16 (MKKWLVVFFLSASALA) is a signal peptide.

Belongs to the LolA family. In terms of assembly, monomer.

Its subcellular location is the periplasm. Its function is as follows. Participates in the translocation of lipoproteins from the inner membrane to the outer membrane. Only forms a complex with a lipoprotein if the residue after the N-terminal Cys is not an aspartate (The Asp acts as a targeting signal to indicate that the lipoprotein should stay in the inner membrane). This Vibrio vulnificus (strain YJ016) protein is Outer-membrane lipoprotein carrier protein.